Consider the following 256-residue polypeptide: Pimeloyl-[acyl-carrier protein] methyl ester esterase (256 aa).

The region spanning 15 to 242 (HLVLLHGWGL…AAHAPFISHP (228 aa)) is the AB hydrolase-1 domain. Substrate contacts are provided by residues W22, 82-83 (SL), and 143-147 (FLALQ). S82 functions as the Nucleophile in the catalytic mechanism. Active-site residues include D207 and H235. H235 contacts substrate.

Belongs to the AB hydrolase superfamily. Carboxylesterase BioH family. In terms of assembly, monomer.

It localises to the cytoplasm. The enzyme catalyses 6-carboxyhexanoyl-[ACP] methyl ester + H2O = 6-carboxyhexanoyl-[ACP] + methanol + H(+). It participates in cofactor biosynthesis; biotin biosynthesis. In terms of biological role, the physiological role of BioH is to remove the methyl group introduced by BioC when the pimeloyl moiety is complete. It allows to synthesize pimeloyl-ACP via the fatty acid synthetic pathway through the hydrolysis of the ester bonds of pimeloyl-ACP esters. The polypeptide is Pimeloyl-[acyl-carrier protein] methyl ester esterase (Escherichia coli O17:K52:H18 (strain UMN026 / ExPEC)).